Reading from the N-terminus, the 163-residue chain is MSSVYDFNVKNANGDDVSLSDYKGKVLIIVNVASQCGLTNKNYTQLKELLDVYKKDGLEVLAFPCNQFAGQEPSCEIDIQAFVADKFKFEPTLFQKIDVNGDKQSPLFKFLKNEKGGFMFDAIKWNFTKFLVGRDGKIIKRFGPTTDPKDMEKDIKEALGEKL.

Cysteine 36 is a catalytic residue.

This sequence belongs to the glutathione peroxidase family.

It localises to the cytoplasm. It carries out the reaction 2 glutathione + H2O2 = glutathione disulfide + 2 H2O. May constitute a glutathione peroxidase-like protective system against oxidative stresses. The chain is Glutathione peroxidase 1 (gpx-1) from Caenorhabditis elegans.